A 645-amino-acid chain; its full sequence is 1-deoxy-D-xylulose-5-phosphate synthase 1 (645 aa).

Thiamine diphosphate-binding positions include H79 and G120–S122. Position 151 (D151) interacts with Mg(2+). Thiamine diphosphate contacts are provided by residues G152–S153, N180, Y291, and E373. N180 is a Mg(2+) binding site.

Belongs to the transketolase family. DXPS subfamily. As to quaternary structure, homodimer. Mg(2+) serves as cofactor. Requires thiamine diphosphate as cofactor.

It catalyses the reaction D-glyceraldehyde 3-phosphate + pyruvate + H(+) = 1-deoxy-D-xylulose 5-phosphate + CO2. The protein operates within metabolic intermediate biosynthesis; 1-deoxy-D-xylulose 5-phosphate biosynthesis; 1-deoxy-D-xylulose 5-phosphate from D-glyceraldehyde 3-phosphate and pyruvate: step 1/1. In terms of biological role, catalyzes the acyloin condensation reaction between C atoms 2 and 3 of pyruvate and glyceraldehyde 3-phosphate to yield 1-deoxy-D-xylulose-5-phosphate (DXP). The polypeptide is 1-deoxy-D-xylulose-5-phosphate synthase 1 (Rhodospirillum rubrum (strain ATCC 11170 / ATH 1.1.1 / DSM 467 / LMG 4362 / NCIMB 8255 / S1)).